A 116-amino-acid chain; its full sequence is Transcription initiation factor IIA subunit 2 (116 aa).

The protein belongs to the TFIIA subunit 2 family. In terms of assembly, TFIIA is a heterodimer composed of the large TOA1 and the small TOA2 subunits.

It localises to the nucleus. Its function is as follows. TFIIA is a component of the transcription machinery of RNA polymerase II and plays an important role in transcriptional activation. TFIIA in a complex with tbp mediates transcriptional activity. The sequence is that of Transcription initiation factor IIA subunit 2 (TOA2) from Pyricularia oryzae (strain 70-15 / ATCC MYA-4617 / FGSC 8958) (Rice blast fungus).